The sequence spans 905 residues: Lateral signaling target protein 2 homolog (905 aa).

Lys87 participates in a covalent cross-link: Glycyl lysine isopeptide (Lys-Gly) (interchain with G-Cter in ubiquitin). At Ser334 the chain carries Phosphoserine. Residues 354-441 (DEMSSLLSPP…RGQDGQSGEV (88 aa)) are disordered. Composition is skewed to polar residues over residues 358-367 (SLLSPPSACQ) and 418-437 (PGNT…QDGQ). At Thr512 the chain carries Phosphothreonine. Disordered regions lie at residues 516 to 552 (NPKS…DNSH) and 589 to 691 (PGSV…RGDV). 2 stretches are compositionally biased toward basic and acidic residues: residues 542 to 552 (PRAEGTGDNSH) and 605 to 615 (GGDKEPERIDE). Positions 647-656 (SGPQVDTASR) are enriched in polar residues. Basic and acidic residues predominate over residues 659-678 (GEGEVKGQPEPEARKQDPEK). An FYVE-type zinc finger spans residues 835-895 (DEACGFCTSC…VCTHCYMFHV (61 aa)). Zn(2+)-binding residues include Cys841, Cys844, Cys857, Cys860, Cys865, Cys868, and Cys887. Position 888 is a phosphothreonine; by MAP2K (Thr888). Zn(2+) is bound at residue Cys890.

This sequence belongs to the lst-2 family. Interacts with TRIM3. Post-translationally, monoubiquitination at Lys-87 prevents binding to phosphatidylinositol 3-phosphate (PI3P) and localization to early endosome membranes. As to expression, enriched in brain (at protein level).

Its subcellular location is the cytoplasm. It is found in the cytosol. The protein resides in the early endosome membrane. In terms of biological role, negative regulator of epidermal growth factor receptor (EGFR) signaling. Acts by promoting EGFR degradation in endosomes when not monoubiquitinated. This Mus musculus (Mouse) protein is Lateral signaling target protein 2 homolog (Zfyve28).